The primary structure comprises 282 residues: 4-diphosphocytidyl-2-C-methyl-D-erythritol kinase (282 aa).

The active site involves K11. 93–103 (LVSAGLAGGSA) contacts ATP. Residue D133 is part of the active site.

This sequence belongs to the GHMP kinase family. IspE subfamily.

The catalysed reaction is 4-CDP-2-C-methyl-D-erythritol + ATP = 4-CDP-2-C-methyl-D-erythritol 2-phosphate + ADP + H(+). It participates in isoprenoid biosynthesis; isopentenyl diphosphate biosynthesis via DXP pathway; isopentenyl diphosphate from 1-deoxy-D-xylulose 5-phosphate: step 3/6. Its function is as follows. Catalyzes the phosphorylation of the position 2 hydroxy group of 4-diphosphocytidyl-2C-methyl-D-erythritol. This is 4-diphosphocytidyl-2-C-methyl-D-erythritol kinase from Ehrlichia chaffeensis (strain ATCC CRL-10679 / Arkansas).